Consider the following 433-residue polypeptide: Signal recognition particle 54 kDa protein (433 aa).

Residues 106 to 113 (GVEGSGKT), 186 to 190 (DTAGR), and 244 to 247 (TKMD) contribute to the GTP site.

The protein belongs to the GTP-binding SRP family. SRP54 subfamily. As to quaternary structure, part of the signal recognition particle protein translocation system, which is composed of SRP and FtsY. Archaeal SRP consists of a 7S RNA molecule of 300 nucleotides and two protein subunits: SRP54 and SRP19.

It localises to the cytoplasm. It catalyses the reaction GTP + H2O = GDP + phosphate + H(+). Its function is as follows. Involved in targeting and insertion of nascent membrane proteins into the cytoplasmic membrane. Binds to the hydrophobic signal sequence of the ribosome-nascent chain (RNC) as it emerges from the ribosomes. The SRP-RNC complex is then targeted to the cytoplasmic membrane where it interacts with the SRP receptor FtsY. This Pyrobaculum arsenaticum (strain DSM 13514 / JCM 11321 / PZ6) protein is Signal recognition particle 54 kDa protein.